The primary structure comprises 526 residues: Transcription factor kayak (526 aa).

Disordered stretches follow at residues 71–165 (PPLA…GTGG) and 178–221 (RNTN…NKQA). 2 stretches are compositionally biased toward low complexity: residues 78–87 (NNNNNNNNNG) and 133–153 (ISDT…HMMG). Residues 154 to 165 (NSGGGNGGGTGG) show a composition bias toward gly residues. The segment covering 178–187 (RNTNTSNSAT) has biased composition (polar residues). The bZIP domain maps to 208 to 271 (EEKRRIRRER…NQLEYFLQAH (64 aa)). The basic motif stretch occupies residues 210–229 (KRRIRRERNKQAAARCRKRR). The leucine-zipper stretch occupies residues 236 to 264 (LTEEVELLEKRGENLKKEMELLNETKNQL). Over residues 301 to 322 (GSCGSGSSHHNNNSNSNDSSSG) the composition is skewed to low complexity. 2 disordered regions span residues 301–345 (GSCG…DLKP) and 504–526 (TSQN…LVSL). Residues 330–340 (TLNSTGRSNSP) show a composition bias toward polar residues. At serine 339 the chain carries Phosphoserine.

Belongs to the bZIP family. Fos subfamily. Homodimer. Heterodimer with Jra. The kay-Jra heterodimer binds more stably to the AP-1 site than either of the two proteins alone.

Its subcellular location is the nucleus. Functionally, developmentally regulated transcription factor AP-1 binds and recognizes the enhancer DNA sequence: 5'-TGA[CG]TCA-3'. May play a role in the function or determination of a particular subset of cells in the developing embryo. It is able to carry out its function either independently of or in conjunction with Jra. The sequence is that of Transcription factor kayak from Drosophila persimilis (Fruit fly).